Here is a 628-residue protein sequence, read N- to C-terminus: Netrin-4 (628 aa).

An N-terminal signal peptide occupies residues 1 to 18 (MGSCARLLLLWGCTVVAA). The Laminin N-terminal domain occupies 30-261 (CEKACNPRMG…AIYDFIVKGS (232 aa)). N-linked (GlcNAc...) asparagine glycosylation is found at N56 and N163. Disulfide bonds link C262/C271, C264/C293, C295/C304, C307/C329, C332/C341, C334/C359, C362/C371, C374/C392, C395/C413, C397/C420, C422/C431, and C434/C446. 3 consecutive Laminin EGF-like domains span residues 262 to 331 (CFCN…ECRT), 332 to 394 (CKCN…ACKP), and 395 to 448 (CSCH…GCRP). N353 is a glycosylation site (N-linked (GlcNAc...) asparagine). N-linked (GlcNAc...) asparagine glycosylation occurs at N483. Disulfide bonds link C506-C576 and C520-C627. One can recognise an NTR domain in the interval 506–627 (CECKEQTLGN…KVMDILKREC (122 aa)).

In terms of assembly, may form a homodimer. As to expression, expressed in kidney, spleen, mammary gland, aorta, heart, ovary, prostate and fetal spleen.

It is found in the secreted. Its subcellular location is the extracellular space. The protein localises to the extracellular matrix. It localises to the basement membrane. May play an important role in neural, kidney and vascular development. Promotes neurite elongation from olfactory bulb explants. This is Netrin-4 (NTN4) from Homo sapiens (Human).